The chain runs to 315 residues: Ectopic P granules protein 4 (315 aa).

A run of 6 helical transmembrane segments spans residues 84–104 (IGFLVLWQVCILILGLFFSFF), 113–133 (IGYILIIPIFFASRIIQALWF), 146–166 (LPPPPVVPFSSMLAGTLISAL), 190–210 (IVYLHMALLNSMYCFDYFFDG), 221–241 (IFESHWPYFLGFGTPLALACS), and 242–262 (ISSNMFVNSVIFALLFPFFII).

This sequence belongs to the EI24 family. As to expression, expressed in pharyngeal and body wall muscles and intestine cells.

It is found in the cytoplasm. It localises to the membrane. Its function is as follows. Involved in autophagy. Thought to act in autophagasome and omegasome formation. This Caenorhabditis elegans protein is Ectopic P granules protein 4.